We begin with the raw amino-acid sequence, 264 residues long: GTP cyclohydrolase FolE2 (264 aa).

Belongs to the GTP cyclohydrolase IV family.

It carries out the reaction GTP + H2O = 7,8-dihydroneopterin 3'-triphosphate + formate + H(+). It functions in the pathway cofactor biosynthesis; 7,8-dihydroneopterin triphosphate biosynthesis; 7,8-dihydroneopterin triphosphate from GTP: step 1/1. Its function is as follows. Converts GTP to 7,8-dihydroneopterin triphosphate. The protein is GTP cyclohydrolase FolE2 of Nitratidesulfovibrio vulgaris (strain ATCC 29579 / DSM 644 / CCUG 34227 / NCIMB 8303 / VKM B-1760 / Hildenborough) (Desulfovibrio vulgaris).